A 284-amino-acid chain; its full sequence is 4-hydroxybenzoate octaprenyltransferase (284 aa).

A run of 8 helical transmembrane segments spans residues 18 to 38 (PIGT…AAEG), 42 to 62 (WHVL…GCVI), 93 to 113 (IILF…MNPL), 136 to 156 (HLPQ…AWAA), 161 to 181 (LPWV…AYDT), 209 to 229 (LIIG…GLHY), 233 to 253 (QSFY…QHLI), and 264 to 284 (AFLN…VAFW).

It belongs to the UbiA prenyltransferase family. Mg(2+) is required as a cofactor.

The protein localises to the cell inner membrane. It carries out the reaction all-trans-octaprenyl diphosphate + 4-hydroxybenzoate = 4-hydroxy-3-(all-trans-octaprenyl)benzoate + diphosphate. Its pathway is cofactor biosynthesis; ubiquinone biosynthesis. Its function is as follows. Catalyzes the prenylation of para-hydroxybenzoate (PHB) with an all-trans polyprenyl group. Mediates the second step in the final reaction sequence of ubiquinone-8 (UQ-8) biosynthesis, which is the condensation of the polyisoprenoid side chain with PHB, generating the first membrane-bound Q intermediate 3-octaprenyl-4-hydroxybenzoate. The polypeptide is 4-hydroxybenzoate octaprenyltransferase (Vibrio vulnificus (strain CMCP6)).